The sequence spans 578 residues: Malonate--CoA ligase ACSF3, mitochondrial (578 aa).

The N-terminal 19 residues, 1–19 (MRVGAFLGRSLFSCSHVRG), are a transit peptide targeting the mitochondrion. Position 205-213 (205-213 (TSGTTGRPK)) interacts with ATP. The segment at 394-413 (QNPRKEGTSYTTHAQGDSTG) is disordered. 3 residues coordinate ATP: Asp-459, Arg-473, and Lys-565.

The protein belongs to the ATP-dependent AMP-binding enzyme family.

The protein resides in the mitochondrion. It carries out the reaction tetracosanoate + ATP + CoA = tetracosanoyl-CoA + AMP + diphosphate. It catalyses the reaction malonate + ATP + CoA = malonyl-CoA + AMP + diphosphate. Functionally, catalyzes the initial reaction in intramitochondrial fatty acid synthesis, by activating malonate and methylmalonate, but not acetate, into their respective CoA thioester. May have some preference toward very-long-chain substrates. This Xenopus laevis (African clawed frog) protein is Malonate--CoA ligase ACSF3, mitochondrial.